A 203-amino-acid polypeptide reads, in one-letter code: LexA repressor (203 aa).

Residues 28 to 48 constitute a DNA-binding region (H-T-H motif); it reads RAEIASQLGFRSPNAAEEHLK. Residues serine 120 and lysine 157 each act as for autocatalytic cleavage activity in the active site.

It belongs to the peptidase S24 family. As to quaternary structure, homodimer.

The catalysed reaction is Hydrolysis of Ala-|-Gly bond in repressor LexA.. Represses a number of genes involved in the response to DNA damage (SOS response), including recA and lexA. Binds to the 16 bp palindromic sequence 5'-CTGTATATATATACAG-3'. In the presence of single-stranded DNA, RecA interacts with LexA causing an autocatalytic cleavage which disrupts the DNA-binding part of LexA, leading to derepression of the SOS regulon and eventually DNA repair. The protein is LexA repressor of Proteus mirabilis (strain HI4320).